A 259-amino-acid polypeptide reads, in one-letter code: GTP cyclohydrolase FolE2 (259 aa).

Belongs to the GTP cyclohydrolase IV family.

The enzyme catalyses GTP + H2O = 7,8-dihydroneopterin 3'-triphosphate + formate + H(+). Its pathway is cofactor biosynthesis; 7,8-dihydroneopterin triphosphate biosynthesis; 7,8-dihydroneopterin triphosphate from GTP: step 1/1. Functionally, converts GTP to 7,8-dihydroneopterin triphosphate. The polypeptide is GTP cyclohydrolase FolE2 (Nitratidesulfovibrio vulgaris (strain DSM 19637 / Miyazaki F) (Desulfovibrio vulgaris)).